A 439-amino-acid polypeptide reads, in one-letter code: Chitinase-like protein Idgf1 (439 aa).

The signal sequence occupies residues 1 to 20 (MRFQLCYLLGLLSVTSLSHA). In terms of domain architecture, GH18 spans 22–439 (SNLICYYDST…IVRSIKYFMG (418 aa)). Cys26 and Cys53 are joined by a disulfide. N-linked (GlcNAc...) asparagine glycans are attached at residues Asn122, Asn218, and Asn346. Residues Cys340 and Cys423 are joined by a disulfide bond.

It belongs to the glycosyl hydrolase 18 family. IDGF subfamily. Post-translationally, glycosylated.

The protein resides in the secreted. Its function is as follows. Cooperates with insulin-like peptides to stimulate the proliferation, polarization and motility of imaginal disk cells. May act by stabilizing the binding of insulin-like peptides to its receptor through a simultaneous interaction with both molecules to form a multiprotein signaling complex. This is Chitinase-like protein Idgf1 (Idgf1) from Drosophila yakuba (Fruit fly).